The following is a 1050-amino-acid chain: Beta-galactosidase (1050 aa).

Asparagine 110 and aspartate 209 together coordinate substrate. Residue aspartate 209 coordinates Na(+). Mg(2+) is bound by residues glutamate 432, histidine 434, and glutamate 477. Substrate contacts are provided by residues glutamate 477 and 553-556; that span reads EYAH. Residue glutamate 477 is the Proton donor of the active site. Catalysis depends on glutamate 553, which acts as the Nucleophile. Asparagine 613 serves as a coordination point for Mg(2+). Na(+) contacts are provided by phenylalanine 617 and asparagine 620. Residues asparagine 620 and tryptophan 1023 each contribute to the substrate site.

The protein belongs to the glycosyl hydrolase 2 family. In terms of assembly, homotetramer. The cofactor is Mg(2+). Na(+) serves as cofactor.

It carries out the reaction Hydrolysis of terminal non-reducing beta-D-galactose residues in beta-D-galactosides.. The sequence is that of Beta-galactosidase from Yersinia enterocolitica serotype O:8 / biotype 1B (strain NCTC 13174 / 8081).